Consider the following 500-residue polypeptide: ATP synthase subunit alpha (500 aa).

169–176 (GDRQTGKT) contacts ATP.

Belongs to the ATPase alpha/beta chains family. As to quaternary structure, F-type ATPases have 2 components, CF(1) - the catalytic core - and CF(0) - the membrane proton channel. CF(1) has five subunits: alpha(3), beta(3), gamma(1), delta(1), epsilon(1). CF(0) has three main subunits: a(1), b(2) and c(9-12). The alpha and beta chains form an alternating ring which encloses part of the gamma chain. CF(1) is attached to CF(0) by a central stalk formed by the gamma and epsilon chains, while a peripheral stalk is formed by the delta and b chains.

Its subcellular location is the cell membrane. It catalyses the reaction ATP + H2O + 4 H(+)(in) = ADP + phosphate + 5 H(+)(out). Functionally, produces ATP from ADP in the presence of a proton gradient across the membrane. The alpha chain is a regulatory subunit. In Lactococcus lactis subsp. cremoris (strain MG1363), this protein is ATP synthase subunit alpha.